We begin with the raw amino-acid sequence, 121 residues long: Large ribosomal subunit protein bL12 (121 aa).

Belongs to the bacterial ribosomal protein bL12 family. As to quaternary structure, homodimer. Part of the ribosomal stalk of the 50S ribosomal subunit. Forms a multimeric L10(L12)X complex, where L10 forms an elongated spine to which 2 to 4 L12 dimers bind in a sequential fashion. Binds GTP-bound translation factors.

Forms part of the ribosomal stalk which helps the ribosome interact with GTP-bound translation factors. Is thus essential for accurate translation. In Tremblaya princeps, this protein is Large ribosomal subunit protein bL12.